The following is a 605-amino-acid chain: DNA primase (605 aa).

The segment at 38 to 62 adopts a CHC2-type zinc-finger fold; the sequence is CPFHDEKTPSFTVSEDKQICHCFGC. The Toprim domain occupies 260–341; that stretch reads DEIVLLEGFM…NVFVIQLPSG (82 aa). The Mg(2+) site is built by E266, D310, and D312.

The protein belongs to the DnaG primase family. In terms of assembly, monomer. Interacts with DnaB. The cofactor is Zn(2+). Mg(2+) serves as cofactor.

The catalysed reaction is ssDNA + n NTP = ssDNA/pppN(pN)n-1 hybrid + (n-1) diphosphate.. In terms of biological role, RNA polymerase that catalyzes the synthesis of short RNA molecules used as primers for DNA polymerase during DNA replication. The protein is DNA primase of Staphylococcus aureus (strain Mu50 / ATCC 700699).